Reading from the N-terminus, the 253-residue chain is 5-oxoprolinase subunit A (253 aa).

The protein belongs to the LamB/PxpA family. Forms a complex composed of PxpA, PxpB and PxpC.

It carries out the reaction 5-oxo-L-proline + ATP + 2 H2O = L-glutamate + ADP + phosphate + H(+). In terms of biological role, catalyzes the cleavage of 5-oxoproline to form L-glutamate coupled to the hydrolysis of ATP to ADP and inorganic phosphate. In Chloroflexus aurantiacus (strain ATCC 29364 / DSM 637 / Y-400-fl), this protein is 5-oxoprolinase subunit A.